A 994-amino-acid chain; its full sequence is Regulator of telomere elongation helicase 1 homolog (994 aa).

The Helicase ATP-binding domain occupies 15 to 324; sequence SKTSIKFPFE…KLIENLRTED (310 aa). 50–57 contributes to the ATP binding site; that stretch reads SPTGTGKT. The [4Fe-4S] cluster site is built by C142, C160, C169, and C208. A DEAH box motif is present at residues 251–254; it reads DEAH. The segment covering 818–831 has biased composition (basic and acidic residues); the sequence is KIEKKEKIEPRPIK. The segment at 818 to 896 is disordered; sequence KIEKKEKIEP…HVVSGSEPPK (79 aa). The segment covering 833–844 has biased composition (polar residues); sequence DSSSSSVFSLPT. Positions 847–856 are enriched in basic and acidic residues; the sequence is DELKVKKWEQ. Composition is skewed to polar residues over residues 859 to 869 and 880 to 889; these read DSQTNVSSSSD and PGNSSGQHVV.

The protein belongs to the helicase family. RAD3/XPD subfamily.

The protein localises to the nucleus. The enzyme catalyses ATP + H2O = ADP + phosphate + H(+). In terms of biological role, a probable ATP-dependent DNA helicase implicated in DNA repair and the maintenance of genomic stability. Acts as an anti-recombinase to counteract toxic recombination and limit crossover during meiosis. Regulates meiotic recombination and crossover homeostasis by physically dissociating strand invasion events and thereby promotes noncrossover repair by meiotic synthesis dependent strand annealing (SDSA) as well as disassembly of D loop recombination intermediates. The sequence is that of Regulator of telomere elongation helicase 1 homolog from Caenorhabditis briggsae.